A 616-amino-acid chain; its full sequence is Chaperone protein HscA (616 aa).

This sequence belongs to the heat shock protein 70 family.

In terms of biological role, chaperone involved in the maturation of iron-sulfur cluster-containing proteins. Has a low intrinsic ATPase activity which is markedly stimulated by HscB. Involved in the maturation of IscU. This chain is Chaperone protein HscA, found in Salmonella paratyphi C (strain RKS4594).